Here is a 251-residue protein sequence, read N- to C-terminus: Maleate isomerase (251 aa).

Residues asparagine 15, 81–83 (CLV), tyrosine 138, and asparagine 168 contribute to the substrate site. Cysteine 81 functions as the Nucleophile in the catalytic mechanism. At cysteine 81 the chain carries S-(2-succinyl)cysteine. Cysteine 199 serves as the catalytic Proton donor. Position 200-201 (200-201 (VQ)) interacts with substrate.

Belongs to the maleate isomerase family. In terms of assembly, homodimer.

The catalysed reaction is maleate = fumarate. In terms of biological role, catalyzes cis-trans isomerization of the C2-C3 double bond in maleate to yield fumarate. The protein is Maleate isomerase of Geobacillus stearothermophilus (Bacillus stearothermophilus).